Consider the following 435-residue polypeptide: Protein CHLOROPLAST IMPORT APPARATUS 2 (435 aa).

The N-terminal 59 residues, 1–59 (MSACLSSGGGGAAAYSFELEKVKSPPPSSSTTTTRATSPSSTISESSNSPLAISTRKPR), are a transit peptide targeting the chloroplast. Disordered regions lie at residues 21-66 (KVKS…KRPN) and 412-435 (ADQR…SGQR). Residues 29–49 (SSTTTTRATSPSSTISESSNS) show a composition bias toward low complexity. The span at 56 to 65 (RKPRTQRKRP) shows a compositional bias: basic residues. A CCT domain is found at 383–425 (REASVLRYKEKRRTRLFSKKIRYQVRKLNADQRPRMKGRFVRR).

Expressed in leaves and young flower buds.

The protein resides in the plastid. It is found in the chloroplast. It localises to the nucleus. Functionally, responsible for specific up-regulation of the translocon genes TOC33 and TOC75 in leaves. Involved in the general chloroplast protein import pathway regulation, including protein import and protein translation efficiencies. The polypeptide is Protein CHLOROPLAST IMPORT APPARATUS 2 (CIA2) (Arabidopsis thaliana (Mouse-ear cress)).